The following is a 155-amino-acid chain: Ribosomal RNA large subunit methyltransferase H (155 aa).

S-adenosyl-L-methionine is bound by residues leucine 72, glycine 103, and 122-127 (LSPLTL).

This sequence belongs to the RNA methyltransferase RlmH family. As to quaternary structure, homodimer.

It localises to the cytoplasm. It catalyses the reaction pseudouridine(1915) in 23S rRNA + S-adenosyl-L-methionine = N(3)-methylpseudouridine(1915) in 23S rRNA + S-adenosyl-L-homocysteine + H(+). Functionally, specifically methylates the pseudouridine at position 1915 (m3Psi1915) in 23S rRNA. The chain is Ribosomal RNA large subunit methyltransferase H from Mannheimia succiniciproducens (strain KCTC 0769BP / MBEL55E).